The sequence spans 557 residues: Chaperonin GroEL 1 (557 aa).

ATP is bound by residues 29–32 (TLGP), lysine 50, 86–90 (DGTTT), glycine 416, and aspartate 495.

It belongs to the chaperonin (HSP60) family. As to quaternary structure, forms a cylinder of 14 subunits composed of two heptameric rings stacked back-to-back. Interacts with the co-chaperonin GroES.

It localises to the cytoplasm. It catalyses the reaction ATP + H2O + a folded polypeptide = ADP + phosphate + an unfolded polypeptide.. Functionally, together with its co-chaperonin GroES, plays an essential role in assisting protein folding. The GroEL-GroES system forms a nano-cage that allows encapsulation of the non-native substrate proteins and provides a physical environment optimized to promote and accelerate protein folding. The sequence is that of Chaperonin GroEL 1 from Protochlamydia amoebophila (strain UWE25).